Reading from the N-terminus, the 468-residue chain is Alpha-2A adrenergic receptor (468 aa).

At 1–48 (MFRQEQPLAEGSFAPMGSLQPDAGNASWNGTEAPGGGARATPYSLQVT) the chain is on the extracellular side. N-linked (GlcNAc...) asparagine glycans are attached at residues asparagine 25 and asparagine 29. The helical transmembrane segment at 49 to 74 (LTLVCLAGLLMLFTVFGNVLVIIAVF) threads the bilayer. Residues 75–85 (TSRALKAPQNL) lie on the Cytoplasmic side of the membrane. Residues 86-111 (FLVSLASADILVATLVIPFSLANEVM) form a helical membrane-spanning segment. At 112–121 (GYWYFGKAWC) the chain is on the extracellular side. Cysteine 121 and cysteine 203 are oxidised to a cystine. Residues 122–144 (EIYLALDVLFCTSSIVHLCAISL) traverse the membrane as a helical segment. The Cytoplasmic portion of the chain corresponds to 145–164 (DRYWSITQAIEYNLKRTPRR). The helical transmembrane segment at 165 to 188 (IKAIIVTVWVISAVISFPPLISFE) threads the bilayer. At 189–207 (KKRGRSGQPSAEPRCEIND) the chain is on the extracellular side. A helical transmembrane segment spans residues 208–232 (QKWYVISSSIGSFFAPCLIMILVYV). Residues 233–392 (RIYQIAKRRT…RQNREKRFTF (160 aa)) are Cytoplasmic-facing. 2 disordered regions span residues 242 to 279 (TRVP…VGPV) and 291 to 381 (NGAP…SRWR). Residues 315–332 (SSEHAERPPGSRRSERGP) show a composition bias toward basic and acidic residues. At serine 348 the chain carries Phosphoserine. Low complexity predominate over residues 351-366 (RRGPGATGLGAPTAGP). Omega-N-methylarginine is present on arginine 370. A helical membrane pass occupies residues 393–417 (VLAVVIGVFVVCWFPFFFTYTLTAI). Over 418–427 (GCPVPPTLFK) the chain is Extracellular. Residues 428–448 (FFFWFGYCNSSLNPVIYTIFN) form a helical membrane-spanning segment. The Cytoplasmic segment spans residues 449 to 468 (HDFRRAFKKILCRGDRKRIV). A lipid anchor (S-palmitoyl cysteine) is attached at cysteine 460.

This sequence belongs to the G-protein coupled receptor 1 family. Adrenergic receptor subfamily. ADRA2A sub-subfamily. As to quaternary structure, component of the ADA2A-containing complex (ATAC), composed of KAT14, KAT2A, TADA2L, TADA3L, ZZ3, MBIP, WDR5, YEATS2, CCDC101 and DR1. As to expression, retina, brain and olfactory lobe.

Its subcellular location is the cell membrane. Its function is as follows. Alpha-2 adrenergic receptors mediate the catecholamine-induced inhibition of adenylate cyclase through the action of G proteins. Component of the ATAC complex, a complex with histone acetyltransferase activity on histones H3 and H4. The polypeptide is Alpha-2A adrenergic receptor (Bos taurus (Bovine)).